Here is a 149-residue protein sequence, read N- to C-terminus: Transcriptional repressor NrdR (149 aa).

Residues 3–34 (CPFCATDDTKVVDSRLTADGYQIRRRRECPVC) fold into a zinc finger. Positions 49–139 (PHIVKNNGSR…VYLSFDDVEE (91 aa)) constitute an ATP-cone domain.

The protein belongs to the NrdR family. The cofactor is Zn(2+).

Functionally, negatively regulates transcription of bacterial ribonucleotide reductase nrd genes and operons by binding to NrdR-boxes. The protein is Transcriptional repressor NrdR of Glaesserella parasuis serovar 5 (strain SH0165) (Haemophilus parasuis).